We begin with the raw amino-acid sequence, 264 residues long: Sec-independent protein translocase protein TatC (264 aa).

Helical transmembrane passes span 20–40 (VVVITGAVTAFLLAFHAEPAE), 85–105 (FFAQVYIAALVGVTVSTPVAV), 131–151 (AVGLFAAGCAFSYIVVIPYIL), 175–195 (FVLQFLLAFGISFQLPLVMFA), 211–231 (IRYALLGIVIFGAAITPDGSG), and 232–252 (VTMWFVAGPMIGLYFAGMFFA).

The protein belongs to the TatC family. In terms of assembly, forms a complex with TatA.

It localises to the cell membrane. Its function is as follows. Part of the twin-arginine translocation (Tat) system that transports large folded proteins containing a characteristic twin-arginine motif in their signal peptide across membranes. This is Sec-independent protein translocase protein TatC from Cenarchaeum symbiosum (strain A).